The sequence spans 245 residues: Adapter protein MecA (245 aa).

It belongs to the MecA family. In terms of assembly, homodimer.

Functionally, enables the recognition and targeting of unfolded and aggregated proteins to the ClpC protease or to other proteins involved in proteolysis. The protein is Adapter protein MecA of Streptococcus pneumoniae (strain ATCC BAA-255 / R6).